The sequence spans 273 residues: MSVAKVDDNRKVTTHRLIEMKQRGEKISMLTAYDYSMAKLIDQAGMDVILVGDSASNVMAGNVTTLPITLDQMIYHGKSVMKAVNRALVVVDLPFGTYQGNSKEALASAIRVMKETHADCIKLEGGAEVRESIERILCAGIPIMGHLGLTPQSINKFGTYTVRAREEAEAKKLIEDAHLLEEIGCFALVLEKIPAELAARVASELTIPVIGIGAGGGVDGQVLVMHDMLGINQGFSPRFLRRYANLGEEITRAVQAYIEDVKSQDFPNEKEQY.

Mg(2+) contacts are provided by Asp-53 and Asp-92. 3-methyl-2-oxobutanoate-binding positions include 53–54 (DS), Asp-92, and Lys-122. Glu-124 provides a ligand contact to Mg(2+). Glu-191 acts as the Proton acceptor in catalysis.

This sequence belongs to the PanB family. In terms of assembly, homodecamer; pentamer of dimers. Requires Mg(2+) as cofactor.

It is found in the cytoplasm. The catalysed reaction is 3-methyl-2-oxobutanoate + (6R)-5,10-methylene-5,6,7,8-tetrahydrofolate + H2O = 2-dehydropantoate + (6S)-5,6,7,8-tetrahydrofolate. It participates in cofactor biosynthesis; (R)-pantothenate biosynthesis; (R)-pantoate from 3-methyl-2-oxobutanoate: step 1/2. Functionally, catalyzes the reversible reaction in which hydroxymethyl group from 5,10-methylenetetrahydrofolate is transferred onto alpha-ketoisovalerate to form ketopantoate. The protein is 3-methyl-2-oxobutanoate hydroxymethyltransferase of Parabacteroides distasonis (strain ATCC 8503 / DSM 20701 / CIP 104284 / JCM 5825 / NCTC 11152).